A 310-amino-acid polypeptide reads, in one-letter code: Ribosomal RNA small subunit methyltransferase H (310 aa).

S-adenosyl-L-methionine is bound by residues 32–34 (GGH), Asp-52, Phe-79, Asp-100, and Gln-107.

This sequence belongs to the methyltransferase superfamily. RsmH family.

It is found in the cytoplasm. It catalyses the reaction cytidine(1402) in 16S rRNA + S-adenosyl-L-methionine = N(4)-methylcytidine(1402) in 16S rRNA + S-adenosyl-L-homocysteine + H(+). In terms of biological role, specifically methylates the N4 position of cytidine in position 1402 (C1402) of 16S rRNA. This chain is Ribosomal RNA small subunit methyltransferase H, found in Bacillus cereus (strain ATCC 10987 / NRS 248).